The sequence spans 327 residues: GMP reductase (327 aa).

Catalysis depends on cysteine 175, which acts as the Thioimidate intermediate. Isoleucine 204 to valine 227 provides a ligand contact to NADP(+).

The protein belongs to the IMPDH/GMPR family. GuaC type 2 subfamily.

It carries out the reaction IMP + NH4(+) + NADP(+) = GMP + NADPH + 2 H(+). Catalyzes the irreversible NADPH-dependent deamination of GMP to IMP. It functions in the conversion of nucleobase, nucleoside and nucleotide derivatives of G to A nucleotides, and in maintaining the intracellular balance of A and G nucleotides. This chain is GMP reductase, found in Lysinibacillus sphaericus (strain C3-41).